Reading from the N-terminus, the 328-residue chain is LOB domain-containing protein 27 (328 aa).

In terms of domain architecture, LOB spans 35–136 (GACAACKYQR…EELKAVNSQL (102 aa)).

It belongs to the LOB domain-containing protein family.

This is LOB domain-containing protein 27 (LBD27) from Arabidopsis thaliana (Mouse-ear cress).